The following is a 359-amino-acid chain: Peptide chain release factor 1 (359 aa).

N5-methylglutamine is present on glutamine 234. The tract at residues 283 to 305 is disordered; that stretch reads SQKDAARAADRRAQVGSGDRSER.

The protein belongs to the prokaryotic/mitochondrial release factor family. Post-translationally, methylated by PrmC. Methylation increases the termination efficiency of RF1.

It localises to the cytoplasm. Its function is as follows. Peptide chain release factor 1 directs the termination of translation in response to the peptide chain termination codons UAG and UAA. The sequence is that of Peptide chain release factor 1 from Methylobacterium nodulans (strain LMG 21967 / CNCM I-2342 / ORS 2060).